A 385-amino-acid chain; its full sequence is Uroporphyrinogen decarboxylase (385 aa).

Substrate contacts are provided by residues 53-57 (RQAGR), D102, Y179, S234, and H363.

This sequence belongs to the uroporphyrinogen decarboxylase family. As to quaternary structure, homodimer.

Its subcellular location is the cytoplasm. It catalyses the reaction uroporphyrinogen III + 4 H(+) = coproporphyrinogen III + 4 CO2. It participates in porphyrin-containing compound metabolism; protoporphyrin-IX biosynthesis; coproporphyrinogen-III from 5-aminolevulinate: step 4/4. Catalyzes the decarboxylation of four acetate groups of uroporphyrinogen-III to yield coproporphyrinogen-III. In Tropheryma whipplei (strain TW08/27) (Whipple's bacillus), this protein is Uroporphyrinogen decarboxylase.